A 232-amino-acid chain; its full sequence is 5'-methylthioadenosine/S-adenosylhomocysteine nucleosidase (232 aa).

Residue glutamate 12 is the Proton acceptor of the active site. Residues glycine 78, isoleucine 152, and 173-174 (ME) each bind substrate. The active-site Proton donor is the aspartate 197.

It belongs to the PNP/UDP phosphorylase family. MtnN subfamily. Homodimer.

It carries out the reaction S-adenosyl-L-homocysteine + H2O = S-(5-deoxy-D-ribos-5-yl)-L-homocysteine + adenine. The enzyme catalyses S-methyl-5'-thioadenosine + H2O = 5-(methylsulfanyl)-D-ribose + adenine. It catalyses the reaction 5'-deoxyadenosine + H2O = 5-deoxy-D-ribose + adenine. The protein operates within amino-acid biosynthesis; L-methionine biosynthesis via salvage pathway; S-methyl-5-thio-alpha-D-ribose 1-phosphate from S-methyl-5'-thioadenosine (hydrolase route): step 1/2. Functionally, catalyzes the irreversible cleavage of the glycosidic bond in both 5'-methylthioadenosine (MTA) and S-adenosylhomocysteine (SAH/AdoHcy) to adenine and the corresponding thioribose, 5'-methylthioribose and S-ribosylhomocysteine, respectively. Also cleaves 5'-deoxyadenosine, a toxic by-product of radical S-adenosylmethionine (SAM) enzymes, into 5-deoxyribose and adenine. Thus, is required for in vivo function of the radical SAM enzymes biotin synthase and lipoic acid synthase, that are inhibited by 5'-deoxyadenosine accumulation. The chain is 5'-methylthioadenosine/S-adenosylhomocysteine nucleosidase from Edwardsiella ictaluri (strain 93-146).